Consider the following 267-residue polypeptide: tRNA pseudouridine synthase A (267 aa).

Aspartate 53 (nucleophile) is an active-site residue. Tyrosine 114 serves as a coordination point for substrate.

The protein belongs to the tRNA pseudouridine synthase TruA family. In terms of assembly, homodimer.

The catalysed reaction is uridine(38/39/40) in tRNA = pseudouridine(38/39/40) in tRNA. Its function is as follows. Formation of pseudouridine at positions 38, 39 and 40 in the anticodon stem and loop of transfer RNAs. The sequence is that of tRNA pseudouridine synthase A from Chlamydia muridarum (strain MoPn / Nigg).